The sequence spans 1249 residues: Protein STU1 (1249 aa).

2 stretches are compositionally biased toward low complexity: residues 138 to 156 and 555 to 574; these read LNSS…TATK and AASP…PSSA. Disordered regions lie at residues 138–161, 545–619, 644–718, 755–846, 860–891, and 1084–1118; these read LNSS…KPHE, KQLE…NPVF, HVET…LGLG, AEHE…NGNI, AFQT…RPEA, and HPAP…EKRT. Residues 581 to 600 are compositionally biased toward basic and acidic residues; it reads KKMDLKAMLAERRRAVKEAG. Low complexity-rich tracts occupy residues 647-667 and 708-718; these read TSSP…RIRP and SPSLSPSLGLG. The segment covering 755 to 774 has biased composition (basic and acidic residues); that stretch reads AEHEVDELTLKEGQKTRDDG. 3 stretches are compositionally biased toward polar residues: residues 809 to 822, 831 to 844, and 863 to 878; these read QQGN…SGRV, ATGT…SRNG, and TPLN…SSAI. The segment covering 1089-1111 has biased composition (low complexity); the sequence is SSSADNSDPMTSALSQLSLSSSK.

The protein belongs to the CLASP family. In terms of assembly, interacts with microtubules.

Its subcellular location is the cytoplasm. The protein resides in the cytoskeleton. The protein localises to the nucleus. It localises to the spindle. Functionally, microtubule binding protein that promotes the stabilization of dynamic microtubules. Required for mitotic spindle formation. The chain is Protein STU1 (STU1) from Cryptococcus neoformans var. neoformans serotype D (strain JEC21 / ATCC MYA-565) (Filobasidiella neoformans).